The following is an 821-amino-acid chain: Leucine--tRNA ligase (821 aa).

The short motif at proline 40–histidine 50 is the 'HIGH' region element. The 'KMSKS' region signature appears at lysine 586–serine 590. An ATP-binding site is contributed by lysine 589.

Belongs to the class-I aminoacyl-tRNA synthetase family.

Its subcellular location is the cytoplasm. It carries out the reaction tRNA(Leu) + L-leucine + ATP = L-leucyl-tRNA(Leu) + AMP + diphosphate. In Aliarcobacter butzleri (strain RM4018) (Arcobacter butzleri), this protein is Leucine--tRNA ligase.